The primary structure comprises 134 residues: Acyl carrier protein, chloroplastic (134 aa).

A chloroplast-targeting transit peptide spans 1-51; that stretch reads MSTTFCSSVSMQATSLAATTRISFQKPGLVSRTNLSFNLRRSIPTRLSVSC. In terms of domain architecture, Carrier spans 55–130; it reads PETVEKVSKI…EAAELIEELV (76 aa). Residue S90 is modified to O-(pantetheine 4'-phosphoryl)serine.

This sequence belongs to the acyl carrier protein (ACP) family. In terms of processing, 4'-phosphopantetheine is transferred from CoA to a specific serine of apo-ACP by acpS. This modification is essential for activity because fatty acids are bound in thioester linkage to the sulfhydryl of the prosthetic group. As to expression, seed.

Its subcellular location is the plastid. It localises to the chloroplast. It participates in lipid metabolism; fatty acid biosynthesis. Functionally, carrier of the growing fatty acid chain in fatty acid biosynthesis. The protein is Acyl carrier protein, chloroplastic (ACL1.A2) of Brassica napus (Rape).